We begin with the raw amino-acid sequence, 41 residues long: Large ribosomal subunit protein bL36 (41 aa).

This sequence belongs to the bacterial ribosomal protein bL36 family.

This is Large ribosomal subunit protein bL36 from Rickettsia massiliae (strain Mtu5).